The primary structure comprises 207 residues: Guanylate kinase (207 aa).

A Guanylate kinase-like domain is found at 4-184 (NMYYAISAPS…TLNKIKTIII (181 aa)). 11–18 (APSGTGKS) contributes to the ATP binding site.

This sequence belongs to the guanylate kinase family.

The protein localises to the cytoplasm. It carries out the reaction GMP + ATP = GDP + ADP. Its function is as follows. Essential for recycling GMP and indirectly, cGMP. This is Guanylate kinase from Wigglesworthia glossinidia brevipalpis.